We begin with the raw amino-acid sequence, 784 residues long: 5-methyltetrahydropteroyltriglutamate--homocysteine methyltransferase (784 aa).

5-methyltetrahydropteroyltri-L-glutamate is bound by residues 16–19 (RELK) and K112. L-homocysteine contacts are provided by residues 460-462 (IGS) and E513. Residues 460–462 (IGS) and E513 each bind L-methionine. W590 contacts 5-methyltetrahydropteroyltri-L-glutamate. D628 is a binding site for L-homocysteine. D628 lines the L-methionine pocket. Residue E634 coordinates 5-methyltetrahydropteroyltri-L-glutamate. Zn(2+)-binding residues include H670, C672, and E694. H723 serves as the catalytic Proton donor. Residue C755 coordinates Zn(2+).

This sequence belongs to the vitamin-B12 independent methionine synthase family. It depends on Zn(2+) as a cofactor.

The catalysed reaction is 5-methyltetrahydropteroyltri-L-glutamate + L-homocysteine = tetrahydropteroyltri-L-glutamate + L-methionine. It participates in amino-acid biosynthesis; L-methionine biosynthesis via de novo pathway; L-methionine from L-homocysteine (MetE route): step 1/1. Its function is as follows. Catalyzes the transfer of a methyl group from 5-methyltetrahydrofolate to homocysteine resulting in methionine formation. The protein is 5-methyltetrahydropteroyltriglutamate--homocysteine methyltransferase of Acidithiobacillus ferrooxidans (strain ATCC 23270 / DSM 14882 / CIP 104768 / NCIMB 8455) (Ferrobacillus ferrooxidans (strain ATCC 23270)).